Consider the following 204-residue polypeptide: Thymidylate kinase (204 aa).

7–14 (GGEGVGKT) serves as a coordination point for ATP.

This sequence belongs to the thymidylate kinase family.

It carries out the reaction dTMP + ATP = dTDP + ADP. Functionally, phosphorylation of dTMP to form dTDP in both de novo and salvage pathways of dTTP synthesis. This Synechococcus sp. (strain JA-3-3Ab) (Cyanobacteria bacterium Yellowstone A-Prime) protein is Thymidylate kinase.